We begin with the raw amino-acid sequence, 503 residues long: Cytochrome P450 11B2, mitochondrial (503 aa).

A mitochondrion-targeting transit peptide spans 1-24 (MALRAKAEVCVAAPWLSLQRARAL). Residue phenylalanine 381 participates in 21-hydroxyprogesterone binding. Cysteine 450 provides a ligand contact to heme.

The protein belongs to the cytochrome P450 family. Heme serves as cofactor. As to expression, expressed sporadically in the zona glomerulosa (zG) of the adrenal cortex (conventional zonation), as well as in aldosterone-producing cell clusters (APCCs) composed of morphological zG cells in contact with the capsule (variegated zonation).

Its subcellular location is the mitochondrion inner membrane. The catalysed reaction is a steroid + 2 reduced [adrenodoxin] + O2 + 2 H(+) = an 11beta-hydroxysteroid + 2 oxidized [adrenodoxin] + H2O. The enzyme catalyses 21-hydroxyprogesterone + 2 reduced [adrenodoxin] + O2 + 2 H(+) = corticosterone + 2 oxidized [adrenodoxin] + H2O. It catalyses the reaction corticosterone + 2 reduced [adrenodoxin] + O2 + 2 H(+) = 18-hydroxycorticosterone + 2 oxidized [adrenodoxin] + H2O. It carries out the reaction 18-hydroxycorticosterone + 2 reduced [adrenodoxin] + O2 + 2 H(+) = aldosterone + 2 oxidized [adrenodoxin] + 2 H2O. The catalysed reaction is 11-deoxycortisol + 2 reduced [adrenodoxin] + O2 + 2 H(+) = cortisol + 2 oxidized [adrenodoxin] + H2O. The enzyme catalyses 21-hydroxyprogesterone + 2 reduced [adrenodoxin] + O2 + 2 H(+) = 18-hydroxy-11-deoxycorticosterone + 2 oxidized [adrenodoxin] + H2O. It catalyses the reaction cortisol + 2 reduced [adrenodoxin] + O2 + 2 H(+) = 18-hydroxycortisol + 2 oxidized [adrenodoxin] + H2O. It carries out the reaction 18-hydroxycortisol + 2 reduced [adrenodoxin] + O2 + 2 H(+) = 18-oxocortisol + 2 oxidized [adrenodoxin] + 2 H2O. It functions in the pathway steroid biosynthesis. In terms of biological role, a cytochrome P450 monooxygenase that catalyzes the biosynthesis of aldosterone, the main mineralocorticoid in the human body responsible for salt and water homeostasis, thus involved in blood pressure regulation, arterial hypertension, and the development of heart failure. Catalyzes three sequential oxidative reactions of 11-deoxycorticosterone (21-hydroxyprogesterone), namely 11-beta hydroxylation, followed by two successive oxidations at C18 yielding 18-hydroxy and then 18-oxo intermediates (that would not leave the enzyme active site during the consecutive hydroxylation reactions), ending with the formation of aldosterone. Can also produce 18-hydroxycortisol and 18-oxocortisol, derived from successive oxidations of cortisol at C18, normally found at very low levels, but significantly increased in primary aldosteronism, the most common form of secondary hypertension. Mechanistically, uses molecular oxygen inserting one oxygen atom into a substrate and reducing the second into a water molecule. Two electrons are provided by NADPH via a two-protein mitochondrial transfer system comprising flavoprotein FDXR (adrenodoxin/ferredoxin reductase) and nonheme iron-sulfur protein FDX1 or FDX2 (adrenodoxin/ferredoxin). Could also be involved in the androgen metabolic pathway. In Homo sapiens (Human), this protein is Cytochrome P450 11B2, mitochondrial.